A 1779-amino-acid chain; its full sequence is Collagen alpha-1(IV) chain (1779 aa).

A signal peptide spans methionine 1–alanine 23. Asparagine 72 is a glycosylation site (N-linked (GlcNAc...) asparagine). Disordered stretches follow at residues glycine 89–leucine 643, aspartate 655–leucine 1187, threonine 1200–arginine 1285, and glycine 1336–glutamate 1530. Over residues glutamine 144–asparagine 163 the composition is skewed to low complexity. 2 stretches are compositionally biased toward basic and acidic residues: residues lysine 196 to proline 217 and proline 249 to lysine 259. The segment covering proline 360 to proline 369 has biased composition (low complexity). Positions glycine 434–glycine 443 are enriched in gly residues. Residues glycine 531–lysine 545 show a composition bias toward low complexity. Positions proline 724–glutamate 747 are enriched in basic and acidic residues. Low complexity-rich tracts occupy residues valine 913–aspartate 931 and proline 1015–aspartate 1036. Over residues glutamate 1106 to glutamate 1127 the composition is skewed to basic and acidic residues. Residues alanine 1151 to proline 1170 are compositionally biased toward low complexity. Basic and acidic residues-rich tracts occupy residues isoleucine 1224–glutamate 1245, glutamate 1496–leucine 1505, and proline 1517–tyrosine 1529. A Collagen IV NC1 domain is found at glycine 1555–serine 1778. Intrachain disulfides connect cysteine 1570/cysteine 1659, cysteine 1603/cysteine 1656, cysteine 1615/cysteine 1621, cysteine 1678/cysteine 1774, cysteine 1712/cysteine 1771, and cysteine 1724/cysteine 1731.

Belongs to the type IV collagen family. Trimers of two alpha 1(IV) and one alpha 2(IV) chain. Type IV collagen forms a mesh-like network linked through intermolecular interactions between 7S domains and between NC1 domains. Post-translationally, prolines at the third position of the tripeptide repeating unit (G-X-Y) are hydroxylated in some or all of the chains. In terms of processing, type IV collagens contain numerous cysteine residues which are involved in inter- and intramolecular disulfide bonding. 12 of these, located in the NC1 domain, are conserved in all known type IV collagens.

The protein resides in the secreted. It is found in the extracellular space. It localises to the extracellular matrix. The protein localises to the basement membrane. Collagen type IV is specific for basement membranes. This Drosophila melanogaster (Fruit fly) protein is Collagen alpha-1(IV) chain.